The chain runs to 480 residues: MAKSPAAVKAEVRRMRRIRRIHFVGIGGVGMCGIAEVLLNLGYEVSGSDLKASAVTERLESFGAKIFIGHAAENAEQADVLVVSSAVNTSNPEVATALERRIPVVPRAEMLAELMRYRHGIAVAGTHGKTTTTSLLASVFAAGGLDPTFVIGGRLNAAGTNAQLGSSRFLIAEADESDASFLHLQPMVSVVTNIDADHMSTYGGDFNRLKKTFIEFLHNLPFYGLAVLCVDDPVVRELLPQVGRPTVTYGFAEDADVRAINVRQEGMRTYFTVLRPDCEPLDVSVNMPGNHNVLNALATIAIATDEGIDDAAIVAGLSGFQGVGRRFQVYGELPVDGGSVMLVDDYGHHPREVAAVIKAVRGGWPERRLVMVYQPHRYSRTRDLYDDFVQVLGEANVLLLVEVYPAGEEPIPGADSRQMCHSIRQRGQLDPIYVERGVDLAPLLKPLLRAGDILLCQGAGDIGAVAPQLIKHPLFVGESK.

125-131 contacts ATP; it reads GTHGKTT.

Belongs to the MurCDEF family.

The protein localises to the cytoplasm. The enzyme catalyses UDP-N-acetyl-alpha-D-muramate + L-alanine + ATP = UDP-N-acetyl-alpha-D-muramoyl-L-alanine + ADP + phosphate + H(+). The protein operates within cell wall biogenesis; peptidoglycan biosynthesis. In terms of biological role, cell wall formation. The protein is UDP-N-acetylmuramate--L-alanine ligase of Ectopseudomonas mendocina (strain ymp) (Pseudomonas mendocina).